We begin with the raw amino-acid sequence, 321 residues long: Ribose-phosphate pyrophosphokinase (321 aa).

ATP-binding positions include 39–41 (DGE) and 98–99 (RQ). Residues histidine 132 and aspartate 170 each coordinate Mg(2+). The active site involves lysine 195. D-ribose 5-phosphate-binding positions include arginine 197, aspartate 221, and 225–229 (DTGGT).

Belongs to the ribose-phosphate pyrophosphokinase family. Class I subfamily. In terms of assembly, homohexamer. Mg(2+) is required as a cofactor.

The protein localises to the cytoplasm. The enzyme catalyses D-ribose 5-phosphate + ATP = 5-phospho-alpha-D-ribose 1-diphosphate + AMP + H(+). The protein operates within metabolic intermediate biosynthesis; 5-phospho-alpha-D-ribose 1-diphosphate biosynthesis; 5-phospho-alpha-D-ribose 1-diphosphate from D-ribose 5-phosphate (route I): step 1/1. Involved in the biosynthesis of the central metabolite phospho-alpha-D-ribosyl-1-pyrophosphate (PRPP) via the transfer of pyrophosphoryl group from ATP to 1-hydroxyl of ribose-5-phosphate (Rib-5-P). This Mycoplasmopsis pulmonis (strain UAB CTIP) (Mycoplasma pulmonis) protein is Ribose-phosphate pyrophosphokinase.